We begin with the raw amino-acid sequence, 408 residues long: Glutathione-independent formaldehyde dehydrogenase (408 aa).

Cys61 serves as a coordination point for Zn(2+). 3 residues coordinate NAD(+): Gly62, Ser63, and His66. Zn(2+)-binding residues include His82, Cys112, Cys115, Cys118, Cys126, and Asp184. The NAD(+) site is built by Val212, Asp232, Arg237, Val277, His284, Pro311, Leu313, Gly348, and Thr350.

It belongs to the zinc-containing alcohol dehydrogenase family. The cofactor is Zn(2+).

It catalyses the reaction formaldehyde + NAD(+) + H2O = formate + NADH + 2 H(+). With respect to regulation, activity is not inhibited by EDTA, which is probably not sufficient to displace the bound metal. Functionally, dehydrogenase that catalyzes the NAD(+)-dependent oxidation of formaldehyde. Exhibits lower activity with acetaldehyde (about 10-fold lower than for formaldehyde), but cannot use methanol, ethanol, 1-butanol, glyoxal or formic acid. Is involved in formaldehyde detoxification. The sequence is that of Glutathione-independent formaldehyde dehydrogenase from Bacillus subtilis (strain 168).